The chain runs to 158 residues: NADH-quinone oxidoreductase subunit B (158 aa).

Residues Cys37, Cys38, Cys102, and Cys132 each contribute to the [4Fe-4S] cluster site.

Belongs to the complex I 20 kDa subunit family. NDH-1 is composed of 14 different subunits. Subunits NuoB, C, D, E, F, and G constitute the peripheral sector of the complex. Requires [4Fe-4S] cluster as cofactor.

The protein localises to the cell inner membrane. The enzyme catalyses a quinone + NADH + 5 H(+)(in) = a quinol + NAD(+) + 4 H(+)(out). In terms of biological role, NDH-1 shuttles electrons from NADH, via FMN and iron-sulfur (Fe-S) centers, to quinones in the respiratory chain. The immediate electron acceptor for the enzyme in this species is believed to be ubiquinone. Couples the redox reaction to proton translocation (for every two electrons transferred, four hydrogen ions are translocated across the cytoplasmic membrane), and thus conserves the redox energy in a proton gradient. This chain is NADH-quinone oxidoreductase subunit B, found in Acidithiobacillus ferrooxidans (strain ATCC 23270 / DSM 14882 / CIP 104768 / NCIMB 8455) (Ferrobacillus ferrooxidans (strain ATCC 23270)).